We begin with the raw amino-acid sequence, 374 residues long: Protein RecA (374 aa).

Position 77–84 (77–84 (GPESSGKT)) interacts with ATP. The interval 355–374 (AAKTAAADKSAPAKASEAAA) is disordered.

It belongs to the RecA family.

It localises to the cytoplasm. In terms of biological role, can catalyze the hydrolysis of ATP in the presence of single-stranded DNA, the ATP-dependent uptake of single-stranded DNA by duplex DNA, and the ATP-dependent hybridization of homologous single-stranded DNAs. It interacts with LexA causing its activation and leading to its autocatalytic cleavage. This Synechococcus sp. (strain CC9605) protein is Protein RecA.